Reading from the N-terminus, the 136-residue chain is Serine--glyoxylate aminotransferase (136 aa).

This sequence belongs to the class-V pyridoxal-phosphate-dependent aminotransferase family. Homodimer. Requires pyridoxal 5'-phosphate as cofactor. In terms of tissue distribution, expressed in leaves but not in root tissue or seedlings.

It localises to the peroxisome. The enzyme catalyses glyoxylate + L-serine = 3-hydroxypyruvate + glycine. The catalysed reaction is glyoxylate + L-alanine = glycine + pyruvate. Its activity is regulated as follows. Inhibited by aminooxyacetate. This Zea mays (Maize) protein is Serine--glyoxylate aminotransferase.